A 98-amino-acid polypeptide reads, in one-letter code: NADH-ubiquinone oxidoreductase chain 4L (98 aa).

3 helical membrane-spanning segments follow: residues 2-22 (TQAS…TLIF), 29-49 (TLLC…MTAL), and 61-81 (IVML…LAMI).

The protein belongs to the complex I subunit 4L family. In terms of assembly, core subunit of respiratory chain NADH dehydrogenase (Complex I) which is composed of 45 different subunits.

The protein resides in the mitochondrion inner membrane. The catalysed reaction is a ubiquinone + NADH + 5 H(+)(in) = a ubiquinol + NAD(+) + 4 H(+)(out). Functionally, core subunit of the mitochondrial membrane respiratory chain NADH dehydrogenase (Complex I) which catalyzes electron transfer from NADH through the respiratory chain, using ubiquinone as an electron acceptor. Part of the enzyme membrane arm which is embedded in the lipid bilayer and involved in proton translocation. This chain is NADH-ubiquinone oxidoreductase chain 4L (MT-ND4L), found in Calomys musculinus (Drylands vesper mouse).